A 269-amino-acid polypeptide reads, in one-letter code: Phosphoribosylformylglycinamidine synthase subunit PurQ (269 aa).

The region spanning 5–262 (VLVMSGYGIN…IESNLQIFKN (258 aa)) is the Glutamine amidotransferase type-1 domain. The active-site Nucleophile is Cys95. Residues His222, Glu224, and Glu232 contribute to the active site.

As to quaternary structure, part of the FGAM synthase complex composed of 1 PurL, 1 PurQ and 2 PurS subunits.

The protein localises to the cytoplasm. It carries out the reaction N(2)-formyl-N(1)-(5-phospho-beta-D-ribosyl)glycinamide + L-glutamine + ATP + H2O = 2-formamido-N(1)-(5-O-phospho-beta-D-ribosyl)acetamidine + L-glutamate + ADP + phosphate + H(+). It catalyses the reaction L-glutamine + H2O = L-glutamate + NH4(+). The protein operates within purine metabolism; IMP biosynthesis via de novo pathway; 5-amino-1-(5-phospho-D-ribosyl)imidazole from N(2)-formyl-N(1)-(5-phospho-D-ribosyl)glycinamide: step 1/2. In terms of biological role, part of the phosphoribosylformylglycinamidine synthase complex involved in the purines biosynthetic pathway. Catalyzes the ATP-dependent conversion of formylglycinamide ribonucleotide (FGAR) and glutamine to yield formylglycinamidine ribonucleotide (FGAM) and glutamate. The FGAM synthase complex is composed of three subunits. PurQ produces an ammonia molecule by converting glutamine to glutamate. PurL transfers the ammonia molecule to FGAR to form FGAM in an ATP-dependent manner. PurS interacts with PurQ and PurL and is thought to assist in the transfer of the ammonia molecule from PurQ to PurL. This chain is Phosphoribosylformylglycinamidine synthase subunit PurQ, found in Methanococcus maripaludis (strain C5 / ATCC BAA-1333).